Reading from the N-terminus, the 440-residue chain is Glycerophosphocholine cholinephosphodiesterase ENPP6 (440 aa).

The first 22 residues, 1-22, serve as a signal peptide directing secretion; the sequence is MAVKLGTLLLALALGLAQPASA. The substrate site is built by aspartate 32, serine 71, and asparagine 92. Aspartate 32 and serine 71 together coordinate Zn(2+). Residue serine 71 is the Nucleophile of the active site. A Phosphoserine modification is found at serine 71. N-linked (GlcNAc...) asparagine glycans are attached at residues asparagine 100 and asparagine 118. Cysteine 142 and cysteine 154 are oxidised to a cystine. Aspartate 193 is a binding site for substrate. Aspartate 193, histidine 197, aspartate 240, and histidine 241 together coordinate Zn(2+). Histidine 241 is a binding site for substrate. Asparagine 341 carries N-linked (GlcNAc...) asparagine glycosylation. Histidine 354 lines the substrate pocket. Histidine 354 provides a ligand contact to Zn(2+). A glycan (N-linked (GlcNAc...) asparagine) is linked at asparagine 404. Serine 419 carries the GPI-anchor amidated serine lipid modification. Residues 420–440 constitute a propeptide, removed in mature form; the sequence is TAPPVWPSHCALALILLFLLA.

Belongs to the nucleotide pyrophosphatase/phosphodiesterase family. Homodimer; disulfide-linked. Homotetramer. Requires Zn(2+) as cofactor. Predominantly expressed in kidney and brain. In the kidney, expressed specifically in the proximal tubules and thin descending limbs of Henle (at protein level).

It is found in the cell membrane. It carries out the reaction sn-glycerol 3-phosphocholine + H2O = phosphocholine + glycerol + H(+). It catalyses the reaction a 1-acyl-sn-glycero-3-phosphocholine + H2O = a 1-acyl-sn-glycerol + phosphocholine + H(+). The enzyme catalyses a 1-O-alkyl-sn-glycero-3-phosphocholine + H2O = a 1-O-alkyl-sn-glycerol + phosphocholine + H(+). The catalysed reaction is 1-dodecanoyl-sn-glycero-3-phosphocholine + H2O = 1-dodecanoyl-sn-glycerol + phosphocholine + H(+). It carries out the reaction 1-hexadecanoyl-sn-glycero-3-phosphocholine + H2O = 1-hexadecanoyl-sn-glycerol + phosphocholine + H(+). It catalyses the reaction 1-(5Z,8Z,11Z,14Z-eicosatetraenoyl)-sn-glycero-3-phosphocholine + H2O = 1-(5Z,8Z,11Z,14Z-eicosatetraenoyl)-sn-glycerol + phosphocholine + H(+). The enzyme catalyses 1-tetradecanoyl-sn-glycero-3-phosphocholine + H2O = 1-tetradecanoyl-sn-glycerol + phosphocholine + H(+). The catalysed reaction is sphing-4-enine-phosphocholine + H2O = sphing-4-enine + phosphocholine + H(+). It carries out the reaction 1-(9Z-octadecenoyl)-sn-glycero-3-phosphocholine + H2O = 1-(9Z-octadecenoyl)-sn-glycerol + phosphocholine + H(+). It catalyses the reaction 1-(9Z,12Z)-octadecadienoyl-sn-glycero-3-phosphocholine + H2O = 1-(9Z,12Z-octadecadienoyl)-sn-glycerol + phosphocholine + H(+). The enzyme catalyses glycero-2-phosphocholine + H2O = phosphocholine + glycerol + H(+). With respect to regulation, inhibited by EDTA and EGTA in vitro. Functionally, choline-specific glycerophosphodiesterase that hydrolyzes glycerophosphocholine (GPC) and lysophosphatidylcholine (LPC) and contributes to supplying choline to the cells. Has a preference for LPC with short (12:0 and 14:0) or polyunsaturated (18:2 and 20:4) fatty acids. In vitro, hydrolyzes only choline-containing lysophospholipids, such as sphingosylphosphorylcholine (SPC), platelet-activating factor (PAF) and lysoPAF, but not other lysophospholipids. The sequence is that of Glycerophosphocholine cholinephosphodiesterase ENPP6 from Homo sapiens (Human).